We begin with the raw amino-acid sequence, 298 residues long: Inosose dehydratase (298 aa).

The protein belongs to the IolE/MocC family. Glutathione serves as cofactor. It depends on Co(2+) as a cofactor. The cofactor is Mn(2+).

The catalysed reaction is scyllo-inosose = 3D-3,5/4-trihydroxycyclohexane-1,2-dione + H2O. In terms of biological role, catalyzes the dehydration of inosose (2-keto-myo-inositol, 2KMI or 2,4,6/3,5-pentahydroxycyclohexanone) to 3D-(3,5/4)-trihydroxycyclohexane-1,2-dione (D-2,3-diketo-4-deoxy-epi-inositol). The chain is Inosose dehydratase from Yersinia enterocolitica serotype O:8 / biotype 1B (strain NCTC 13174 / 8081).